The primary structure comprises 280 residues: Dermonecrotic toxin LgSicTox-alphaIA1 (280 aa).

Residue H12 is part of the active site. Mg(2+) contacts are provided by E32 and D34. The active-site Nucleophile is the H48. The cysteines at positions 52 and 58 are disulfide-linked. Position 92 (D92) interacts with Mg(2+).

It belongs to the arthropod phospholipase D family. Class I subfamily. Requires Mg(2+) as cofactor. As to expression, expressed by the venom gland.

The protein localises to the secreted. The catalysed reaction is an N-(acyl)-sphingosylphosphocholine = an N-(acyl)-sphingosyl-1,3-cyclic phosphate + choline. The enzyme catalyses an N-(acyl)-sphingosylphosphoethanolamine = an N-(acyl)-sphingosyl-1,3-cyclic phosphate + ethanolamine. It carries out the reaction a 1-acyl-sn-glycero-3-phosphocholine = a 1-acyl-sn-glycero-2,3-cyclic phosphate + choline. It catalyses the reaction a 1-acyl-sn-glycero-3-phosphoethanolamine = a 1-acyl-sn-glycero-2,3-cyclic phosphate + ethanolamine. Its function is as follows. Dermonecrotic toxins cleave the phosphodiester linkage between the phosphate and headgroup of certain phospholipids (sphingolipid and lysolipid substrates), forming an alcohol (often choline) and a cyclic phosphate. This toxin acts on sphingomyelin (SM). It may also act on ceramide phosphoethanolamine (CPE), lysophosphatidylcholine (LPC) and lysophosphatidylethanolamine (LPE), but not on lysophosphatidylserine (LPS), and lysophosphatidylglycerol (LPG). It acts by transphosphatidylation, releasing exclusively cyclic phosphate products as second products. Induces dermonecrosis, hemolysis, increased vascular permeability, edema, inflammatory response, and platelet aggregation. This Loxosceles gaucho (Spider) protein is Dermonecrotic toxin LgSicTox-alphaIA1.